The following is a 55-amino-acid chain: Mitochondrial import receptor subunit TOM7 homolog (55 aa).

Residues 1-20 (MVKLSKEAKQRLQQLFKGGQ) are Cytoplasmic-facing. The helical transmembrane segment at 21 to 40 (FAIRWGFIPLVIYLGFTRGA) threads the bilayer. Over 41–55 (DPGMPEPSVLSLLWG) the chain is Mitochondrial intermembrane.

It belongs to the Tom7 family. As to quaternary structure, forms part of the preprotein translocase complex of the outer mitochondrial membrane (TOM complex) which consists of at least 7 different proteins (TOMM5, TOMM6, TOMM7, TOMM20, TOMM22, TOMM40 and TOMM70).

It is found in the mitochondrion outer membrane. Functionally, required for assembly and stability of the TOM complex. Positive regulator of PRKN translocation to damaged mitochondria. Acts probably by stabilizing PINK1 on the outer membrane of depolarized mitochondria. The chain is Mitochondrial import receptor subunit TOM7 homolog (Tomm7) from Mus musculus (Mouse).